The following is a 176-amino-acid chain: Urease accessory protein UreE (176 aa).

The protein belongs to the UreE family.

Its subcellular location is the cytoplasm. Its function is as follows. Involved in urease metallocenter assembly. Binds nickel. Probably functions as a nickel donor during metallocenter assembly. In Helicobacter bizzozeronii, this protein is Urease accessory protein UreE.